The primary structure comprises 721 residues: Catalase-peroxidase 1 (721 aa).

Positions 98–226 (WHAAGTYRIA…LAAVMMGLIY (129 aa)) form a cross-link, tryptophyl-tyrosyl-methioninium (Trp-Tyr) (with M-252). Catalysis depends on H99, which acts as the Proton acceptor. A cross-link (tryptophyl-tyrosyl-methioninium (Tyr-Met) (with W-98)) is located at residues 226 to 252 (YVNPEGVDGQPDPLKTAHDVRVTFARM). H267 is a binding site for heme b.

This sequence belongs to the peroxidase family. Peroxidase/catalase subfamily. Homodimer or homotetramer. The cofactor is heme b. Formation of the three residue Trp-Tyr-Met cross-link is important for the catalase, but not the peroxidase activity of the enzyme.

The catalysed reaction is H2O2 + AH2 = A + 2 H2O. The enzyme catalyses 2 H2O2 = O2 + 2 H2O. In terms of biological role, bifunctional enzyme with both catalase and broad-spectrum peroxidase activity. The polypeptide is Catalase-peroxidase 1 (Vibrio parahaemolyticus serotype O3:K6 (strain RIMD 2210633)).